A 616-amino-acid chain; its full sequence is Chaperone protein HscA (616 aa).

This sequence belongs to the heat shock protein 70 family.

Chaperone involved in the maturation of iron-sulfur cluster-containing proteins. Has a low intrinsic ATPase activity which is markedly stimulated by HscB. Involved in the maturation of IscU. The chain is Chaperone protein HscA from Salmonella newport (strain SL254).